We begin with the raw amino-acid sequence, 265 residues long: 3-deoxy-manno-octulosonate cytidylyltransferase 2 (265 aa).

The protein belongs to the KdsB family.

It is found in the cytoplasm. It carries out the reaction 3-deoxy-alpha-D-manno-oct-2-ulosonate + CTP = CMP-3-deoxy-beta-D-manno-octulosonate + diphosphate. It functions in the pathway nucleotide-sugar biosynthesis; CMP-3-deoxy-D-manno-octulosonate biosynthesis; CMP-3-deoxy-D-manno-octulosonate from 3-deoxy-D-manno-octulosonate and CTP: step 1/1. It participates in bacterial outer membrane biogenesis; lipopolysaccharide biosynthesis. Activates KDO (a required 8-carbon sugar) for incorporation into bacterial lipopolysaccharide in Gram-negative bacteria. The polypeptide is 3-deoxy-manno-octulosonate cytidylyltransferase 2 (Burkholderia lata (strain ATCC 17760 / DSM 23089 / LMG 22485 / NCIMB 9086 / R18194 / 383)).